A 281-amino-acid polypeptide reads, in one-letter code: 4-diphosphocytidyl-2-C-methyl-D-erythritol kinase (281 aa).

K15 is a catalytic residue. 98-108 (PTGAGLGGGSS) provides a ligand contact to ATP. Residue D140 is part of the active site.

It belongs to the GHMP kinase family. IspE subfamily.

The catalysed reaction is 4-CDP-2-C-methyl-D-erythritol + ATP = 4-CDP-2-C-methyl-D-erythritol 2-phosphate + ADP + H(+). Its pathway is isoprenoid biosynthesis; isopentenyl diphosphate biosynthesis via DXP pathway; isopentenyl diphosphate from 1-deoxy-D-xylulose 5-phosphate: step 3/6. Functionally, catalyzes the phosphorylation of the position 2 hydroxy group of 4-diphosphocytidyl-2C-methyl-D-erythritol. The sequence is that of 4-diphosphocytidyl-2-C-methyl-D-erythritol kinase from Neisseria gonorrhoeae (strain NCCP11945).